The following is an 850-amino-acid chain: Rho guanine nucleotide exchange factor 33 (850 aa).

2 stretches are compositionally biased toward basic and acidic residues: residues Met1–His13 and Glu98–Arg113. Disordered stretches follow at residues Met1–Thr21 and Glu98–Leu209. The stretch at Leu54–His128 forms a coiled coil. Over residues Ala130 to Pro149 the composition is skewed to low complexity. The span at Asp164–Glu175 shows a compositional bias: polar residues. A DH domain is found at Lys273–Leu448. Disordered stretches follow at residues Glu504 to Glu550 and Ala702 to Trp850. Low complexity-rich tracts occupy residues Pro510–Ser520 and Ala754–Arg770. Arg766 is modified (omega-N-methylarginine). The segment covering Phe773–Gln783 has biased composition (polar residues). A compositionally biased stretch (basic and acidic residues) spans Thr784–Glu806. Positions Ser826–Asn835 are enriched in basic residues.

The sequence is that of Rho guanine nucleotide exchange factor 33 (Arhgef33) from Mus musculus (Mouse).